A 267-amino-acid polypeptide reads, in one-letter code: 5'-nucleotidase SurE (267 aa).

Residues Asp9, Asp10, Ser40, and Asn97 each coordinate a divalent metal cation.

The protein belongs to the SurE nucleotidase family. A divalent metal cation is required as a cofactor.

It localises to the cytoplasm. It carries out the reaction a ribonucleoside 5'-phosphate + H2O = a ribonucleoside + phosphate. Functionally, nucleotidase that shows phosphatase activity on nucleoside 5'-monophosphates. This chain is 5'-nucleotidase SurE, found in Helicobacter pylori (strain ATCC 700392 / 26695) (Campylobacter pylori).